Consider the following 533-residue polypeptide: WUSCHEL-related homeobox 7 (533 aa).

Disordered regions lie at residues 1 to 74 and 125 to 212; these read MASS…NPRP and SKNK…STQA. The segment covering 28–41 has biased composition (low complexity); sequence AGSPPSLLSGSSAG. Residues 59–68 show a composition bias toward basic and acidic residues; that stretch reads GEERVPDPKP. Positions 65–129 form a DNA-binding region, homeobox; WUS-type; it reads DPKPRWNPRP…NRKSRSKNKL (65 aa). A compositionally biased stretch (gly residues) spans 132-143; that stretch reads GGTGRAGLGLGG. The span at 161-174 shows a compositional bias: pro residues; sequence FTPPPPILPAPQPV. Low complexity predominate over residues 175–202; sequence QPQQQLVSPVAAPTSSSSSSSDRSSGSS.

Belongs to the WUS homeobox family.

It is found in the nucleus. Its function is as follows. Transcription factor which may be involved in developmental processes. In Oryza sativa subsp. japonica (Rice), this protein is WUSCHEL-related homeobox 7 (WOX7).